Consider the following 908-residue polypeptide: 26S proteasome non-ATPase regulatory subunit 2 (908 aa).

The residue at position 1 (methionine 1) is an N-acetylmethionine. The interval 1 to 52 (MEEGGRDKAPVQPQQSPAAALGGTDEKPSGKERRDAGDKDKEQELSEEDKQL) is disordered. The segment covering 10 to 20 (PVQPQQSPAAA) has biased composition (low complexity). The residue at position 16 (serine 16) is a Phosphoserine. Threonine 24 carries the post-translational modification Phosphothreonine. Over residues 24-52 (TDEKPSGKERRDAGDKDKEQELSEEDKQL) the composition is skewed to basic and acidic residues. Residues serine 29 and serine 147 each carry the phosphoserine modification. Tyrosine 194 carries the phosphotyrosine modification. 2 positions are modified to phosphoserine: serine 361 and serine 363. 5 PC repeats span residues 409-442 (SAAASLGMILLWDVDGGLTQIDKYLYSSEDYIKS), 443-479 (GALLACGIVNSGVRNECDPALALLSDYVLHNSNTMRL), 480-514 (GSIFGLGLAYAGSNREDVLTLLLPVMGDSKSSMEV), 517-551 (VTALACGMIAVGSCNGDVTSTILQTIMEKSETELK), and 560-589 (LGLGLNHLGKGEAIEAILAALEVVSEPFRS). Residue lysine 551 is modified to N6-acetyllysine. A compositionally biased stretch (basic and acidic residues) spans 623–643 (KEKEEDKDKKEKKDKDKKEAP). Residues 623 to 645 (KEKEEDKDKKEKKDKDKKEAPAD) are disordered. 2 PC repeats span residues 692–723 (LALALISVSNPRLNILDTLSKFSHDADPEVSY) and 742–757 (AAMLRQLAQYHAKDPN). The interval 708–903 (DTLSKFSHDA…LEGFVILRKN (196 aa)) is required for interaction with UBLCP1.

Belongs to the proteasome subunit S2 family. As to quaternary structure, component of the 19S proteasome regulatory particle complex. The 26S proteasome consists of a 20S core particle (CP) and two 19S regulatory subunits (RP). The regulatory particle is made of a lid composed of 9 subunits, a base containing 6 ATPases and few additional components including PSMD2. Interacts with RPGRIP1L. Interacts with CRY1 in a KDM8-dependent manner. Interacts (via C-terminus) with phosphatase UBLCP1 (via ubiquitin-like domain); the interaction recruits UBLCP1 to the 19S regulatory particle where it dephosphorylates 19S subunit PSMC2/RPT1 which impairs PSMC2 ATPase activity and disrupts 26S proteasome assembly.

Component of the 26S proteasome, a multiprotein complex involved in the ATP-dependent degradation of ubiquitinated proteins. This complex plays a key role in the maintenance of protein homeostasis by removing misfolded or damaged proteins, which could impair cellular functions, and by removing proteins whose functions are no longer required. Therefore, the proteasome participates in numerous cellular processes, including cell cycle progression, apoptosis, or DNA damage repair. Functionally, binds to the intracellular domain of tumor necrosis factor type 1 receptor. The binding domain of TRAP1 and TRAP2 resides outside the death domain of TNFR1. The polypeptide is 26S proteasome non-ATPase regulatory subunit 2 (PSMD2) (Pongo abelii (Sumatran orangutan)).